The following is a 118-amino-acid chain: Small ribosomal subunit protein uS13 (118 aa).

The tract at residues 94 to 118 (SLPLRGQRTKTNARTRKGPRKAIKK) is disordered.

It belongs to the universal ribosomal protein uS13 family. As to quaternary structure, part of the 30S ribosomal subunit. Forms a loose heterodimer with protein S19. Forms two bridges to the 50S subunit in the 70S ribosome.

Its function is as follows. Located at the top of the head of the 30S subunit, it contacts several helices of the 16S rRNA. In the 70S ribosome it contacts the 23S rRNA (bridge B1a) and protein L5 of the 50S subunit (bridge B1b), connecting the 2 subunits; these bridges are implicated in subunit movement. Contacts the tRNAs in the A and P-sites. In Pseudoalteromonas atlantica (strain T6c / ATCC BAA-1087), this protein is Small ribosomal subunit protein uS13.